Consider the following 318-residue polypeptide: Olfactory receptor 13C9 (318 aa).

Over 1–25 (MEWENQTILVEFFLKGHSVHPRLEL) the chain is Extracellular. A glycan (N-linked (GlcNAc...) asparagine) is linked at Asn-5. A helical transmembrane segment spans residues 26–46 (LFFVLIFIMYVVILLGNGTLI). Residues 47-54 (LISILDPH) are Cytoplasmic-facing. Residues 55–75 (LHTPMYFFLGNLSFLDICYTT) form a helical membrane-spanning segment. Over 76–99 (TSIPSTLVSFLSERKTISFSGCAV) the chain is Extracellular. Cys-97 and Cys-189 are disulfide-bonded. The helical transmembrane segment at 100–120 (QMFLGLAMGTTECVLLGMMAF) threads the bilayer. The Cytoplasmic portion of the chain corresponds to 121 to 139 (DRYVAICNPLRYPIIMSKN). A helical membrane pass occupies residues 140-160 (AYVPMAVGSWFAGIVNSAVQT). At 161-197 (TFVVQLPFCRKNVINHFSCEILAVMKLACADISGNEF) the chain is on the extracellular side. A helical membrane pass occupies residues 198 to 217 (LMLVATILFTLMPLLLIVIS). Topologically, residues 218 to 237 (YSLIISSILKIHSSEGRSKA) are cytoplasmic. The chain crosses the membrane as a helical span at residues 238–258 (FSTCSAHLTVVIIFYGTILFM). Residues 259 to 277 (YMKPKSKETLNSDDLDATD) are Extracellular-facing. A helical transmembrane segment spans residues 278-298 (KIISMFYGVMTPMMNPLIYSL). The Cytoplasmic segment spans residues 299-318 (RNKDVKEAVKHLPNRRFFSK).

It belongs to the G-protein coupled receptor 1 family.

The protein localises to the cell membrane. Its function is as follows. Odorant receptor. This is Olfactory receptor 13C9 (OR13C9) from Homo sapiens (Human).